The chain runs to 464 residues: L-cystine uptake protein TcyP (464 aa).

Transmembrane regions (helical) follow at residues 3–23, 34–54, 73–93, 107–127, 184–204, 225–245, 263–283, 347–367, 371–391, and 395–415; these read TLLVGINVAVMLILVGVLYYM, VFTALGVGILFGLILQFIYEP, YVKLLQMIVMPLILVSIISAF, GLIIGILILTTGIAAAVGIAA, PTSTISVVIFAAFIGIAFIGV, IVMRMVTLILRLTPYGVLALM, FVLASYVALIVMFIIHLLLIA, AGIYPAMLAMMVAPTVGIDPL, FILTLIAVVAISSFGVAGVGG, and FAALIVLSTMNLPIGIVALVI.

It belongs to the dicarboxylate/amino acid:cation symporter (DAACS) (TC 2.A.23) family.

The protein localises to the membrane. In terms of biological role, mediates uptake of L-cystine, the oxidized form of L-cysteine. In Bacillus cereus (strain ATCC 14579 / DSM 31 / CCUG 7414 / JCM 2152 / NBRC 15305 / NCIMB 9373 / NCTC 2599 / NRRL B-3711), this protein is L-cystine uptake protein TcyP.